The sequence spans 337 residues: MLMATDAIGSDAVHIPVMRARILDLLAVVLKSGRRVHVDGTLGMGGHAEAVLRRFPDVELVGIDRDQQALTMAEARLEPFADRVHLVHAVHDELPEVLDDLGLDYVDSVLLDLGLSSFQIDEVERGFSYSVDSPLDMRMDQSSGRTAAQILNESDPGALVRMLREYGEEKFADRIVRAIVTERDRQPIETSGRLVEIITEAIPATVRRKRHSHPAKRTFQALRIAVNREMETLPAVLPRALDRLDVGGRIAVLSYHSLEDRPVKEAFRDACADTAPAGLPMVPESMAAKFNPVTRGAERPDADEVATNPRSASARLRVIERVRPGPVNRQHATKESR.

Residues 45–47, aspartate 64, histidine 91, aspartate 112, and glutamine 119 contribute to the S-adenosyl-L-methionine site; that span reads GGH.

The protein belongs to the methyltransferase superfamily. RsmH family.

It localises to the cytoplasm. The catalysed reaction is cytidine(1402) in 16S rRNA + S-adenosyl-L-methionine = N(4)-methylcytidine(1402) in 16S rRNA + S-adenosyl-L-homocysteine + H(+). Specifically methylates the N4 position of cytidine in position 1402 (C1402) of 16S rRNA. The chain is Ribosomal RNA small subunit methyltransferase H from Cutibacterium acnes (strain DSM 16379 / KPA171202) (Propionibacterium acnes).